Consider the following 208-residue polypeptide: MVKVNVIFHSIHGHTYKMAEAIAEGAREVEGAEVEIYQVPETLPYEVLEKMGAIETKNLFAHIPVVTRSMYEDVFAGADALIFGTPTRYGNMTAQMRTVFDGLGGLWSRDALVGKVGSVFTSSGTQHGGQESTILTTHVTLLHLGMIIVGLPYSETRQRRMDEITGGSPYGASTIAGAEENRQPSENELAMARYQGRHVTQIAKKLIG.

The region spanning 4 to 199 is the Flavodoxin-like domain; the sequence is VNVIFHSIHG…AMARYQGRHV (196 aa). FMN-binding positions include 10 to 15 and 87 to 89; these read SIHGHT and TRY. W107 is a substrate binding site. FMN contacts are provided by residues 122 to 128 and H143; that span reads SSGTQHG.

This sequence belongs to the WrbA family. FMN is required as a cofactor.

The enzyme catalyses a quinone + NADH + H(+) = a quinol + NAD(+). It carries out the reaction a quinone + NADPH + H(+) = a quinol + NADP(+). In Methanosarcina barkeri (strain Fusaro / DSM 804), this protein is NAD(P)H dehydrogenase (quinone).